A 206-amino-acid chain; its full sequence is Probable N-acetyltransferase 14 (206 aa).

An N-acetyltransferase domain is found at 55–206 (LRFVLASFAL…TLVREFSKEL (152 aa)). Residues 57–77 (FVLASFALALLLPVFLAVAAM) traverse the membrane as a helical segment.

The protein belongs to the camello family.

The protein resides in the membrane. Functionally, probable acetyltransferase. May act as a transcription factor regulating the expression of coproporphyrinogen oxidase by binding to a promoter regulatory element. This is Probable N-acetyltransferase 14 from Bos taurus (Bovine).